The primary structure comprises 163 residues: Large ribosomal subunit protein bL17 (163 aa).

A disordered region spans residues 127–163 (KEVKKAKSRRGGKAKKAEGTAPEAPAAESESTTEASE). Residues 128–140 (EVKKAKSRRGGKA) are compositionally biased toward basic residues. Over residues 145-163 (GTAPEAPAAESESTTEASE) the composition is skewed to low complexity.

Belongs to the bacterial ribosomal protein bL17 family. Part of the 50S ribosomal subunit. Contacts protein L32.

The protein is Large ribosomal subunit protein bL17 of Flavobacterium johnsoniae (strain ATCC 17061 / DSM 2064 / JCM 8514 / BCRC 14874 / CCUG 350202 / NBRC 14942 / NCIMB 11054 / UW101) (Cytophaga johnsonae).